The following is a 30-amino-acid chain: Truncated interleukin-1-binding protein (30 aa).

Positions 1-18 are cleaved as a signal peptide; it reads MSILPVIFLPIFFYSSFV.

The protein belongs to the interleukin-1 receptor family.

The chain is Truncated interleukin-1-binding protein from Vaccinia virus (strain Copenhagen) (VACV).